The chain runs to 513 residues: ATP synthase subunit alpha (513 aa).

170–177 (GDRQTGKT) is an ATP binding site.

It belongs to the ATPase alpha/beta chains family. As to quaternary structure, F-type ATPases have 2 components, CF(1) - the catalytic core - and CF(0) - the membrane proton channel. CF(1) has five subunits: alpha(3), beta(3), gamma(1), delta(1), epsilon(1). CF(0) has four main subunits: a(1), b(1), b'(1) and c(9-12).

The protein localises to the cell inner membrane. It catalyses the reaction ATP + H2O + 4 H(+)(in) = ADP + phosphate + 5 H(+)(out). Functionally, produces ATP from ADP in the presence of a proton gradient across the membrane. The alpha chain is a regulatory subunit. This Gloeobacter violaceus (strain ATCC 29082 / PCC 7421) protein is ATP synthase subunit alpha.